Here is an 81-residue protein sequence, read N- to C-terminus: Short neurotoxin 2 (81 aa).

The N-terminal stretch at 1 to 21 (MKTLLLTLVVVTIVCLDLGYT) is a signal peptide. Disulfide bonds link cysteine 24/cysteine 43, cysteine 38/cysteine 60, cysteine 62/cysteine 73, and cysteine 74/cysteine 79.

Belongs to the three-finger toxin family. Short-chain subfamily. Type I alpha-neurotoxin sub-subfamily. As to expression, expressed by the venom gland.

It is found in the secreted. Its function is as follows. Binds to muscle nicotinic acetylcholine receptor (nAChR) and inhibit acetylcholine from binding to the receptor, thereby impairing neuromuscular transmission. The protein is Short neurotoxin 2 of Hydrophis hardwickii (Hardwick's spine-bellied seasnake).